A 248-amino-acid chain; its full sequence is 2,3-bisphosphoglycerate-dependent phosphoglycerate mutase (248 aa).

Residues 8–15 (RHGESVWN), 21–22 (TG), Arg60, 87–90 (ERHY), Lys98, and 114–115 (RR) each bind substrate. The Tele-phosphohistidine intermediate role is filled by His9. Catalysis depends on Glu87, which acts as the Proton donor/acceptor. The disordered stretch occupies residues 116-135 (SYDTPPPPMEVSDPRHPSHD). A substrate-binding site is contributed by 183 to 184 (GN).

It belongs to the phosphoglycerate mutase family. BPG-dependent PGAM subfamily. Homodimer.

The catalysed reaction is (2R)-2-phosphoglycerate = (2R)-3-phosphoglycerate. Its pathway is carbohydrate degradation; glycolysis; pyruvate from D-glyceraldehyde 3-phosphate: step 3/5. Functionally, catalyzes the interconversion of 2-phosphoglycerate and 3-phosphoglycerate. This Bdellovibrio bacteriovorus (strain ATCC 15356 / DSM 50701 / NCIMB 9529 / HD100) protein is 2,3-bisphosphoglycerate-dependent phosphoglycerate mutase.